The following is a 152-amino-acid chain: Protein NrdI (152 aa).

This sequence belongs to the NrdI family.

Its function is as follows. Probably involved in ribonucleotide reductase function. This Rhodococcus opacus (strain B4) protein is Protein NrdI.